The chain runs to 156 residues: Small ribosomal subunit protein uS7 (156 aa).

It belongs to the universal ribosomal protein uS7 family. In terms of assembly, part of the 30S ribosomal subunit. Contacts proteins S9 and S11.

Functionally, one of the primary rRNA binding proteins, it binds directly to 16S rRNA where it nucleates assembly of the head domain of the 30S subunit. Is located at the subunit interface close to the decoding center, probably blocks exit of the E-site tRNA. This is Small ribosomal subunit protein uS7 from Streptococcus mutans serotype c (strain ATCC 700610 / UA159).